A 114-amino-acid polypeptide reads, in one-letter code: Cytochrome c oxidase subunit 4B (114 aa).

3 helical membrane passes run 29 to 49 (QIVV…AVAT), 56 to 76 (FAIP…LFFF), and 89 to 109 (AFMI…MLLL).

This sequence belongs to the cytochrome c oxidase bacterial subunit 4 family.

It is found in the cell membrane. The catalysed reaction is 4 Fe(II)-[cytochrome c] + O2 + 8 H(+)(in) = 4 Fe(III)-[cytochrome c] + 2 H2O + 4 H(+)(out). This Alkalihalophilus pseudofirmus (strain ATCC BAA-2126 / JCM 17055 / OF4) (Bacillus pseudofirmus) protein is Cytochrome c oxidase subunit 4B (ctaF).